Reading from the N-terminus, the 305-residue chain is uncharacterized protein (305 aa).

Residues 255 to 305 (RCHRAGLRSPPRTREPLWSLGPSGGEAAGEAPGGKGPPTPVLPHARRAGAA) are disordered. Residues 276–288 (PSGGEAAGEAPGG) show a composition bias toward gly residues.

This is an uncharacterized protein from Streptomyces fradiae (Streptomyces roseoflavus).